The chain runs to 757 residues: Tyrosine-protein kinase HTK16 (757 aa).

In terms of domain architecture, SH2 1 spans 10-102; sequence WYHGKITREV…GLPCKLVDFC (93 aa). ANK repeat units follow at residues 115-147, 151-180, 184-214, 219-248, and 252-281; these read GLDT…NVNA, SGLT…DASA, NGRT…DFLK, NGWV…SMYP, and DGDT…NQPK. Residues 287 to 379 enclose the SH2 2 domain; that stretch reads WLHQNLDRNG…GLPTLLQFPV (93 aa). Disordered regions lie at residues 381-407 and 444-467; these read SAEN…PSRP and PKLP…QKGD. The segment covering 455–467 has biased composition (polar residues); the sequence is EVPNSVNVGQKGD. A Protein kinase domain is found at 484 to 740; that stretch reads ISFGKELGVG…PTFNELHSTF (257 aa). ATP contacts are provided by residues 490-498 and lysine 516; that span reads LGVGEFGSV. The active-site Proton acceptor is the aspartate 608. Position 746 is a phosphotyrosine (tyrosine 746).

Belongs to the protein kinase superfamily. Tyr protein kinase family. In terms of tissue distribution, epithelial cells.

It catalyses the reaction L-tyrosyl-[protein] + ATP = O-phospho-L-tyrosyl-[protein] + ADP + H(+). Functionally, may be involved in signal transduction. This is Tyrosine-protein kinase HTK16 (HTK16) from Hydra vulgaris (Hydra).